A 38-amino-acid polypeptide reads, in one-letter code: ATP synthase subunit O, mitochondrial (38 aa).

Belongs to the ATPase delta chain family. As to quaternary structure, F-type ATPases have 2 components, CF(1) - the catalytic core - and CF(0) - the membrane proton channel. CF(1) has five subunits: alpha(3), beta(3), gamma(1), delta(1), epsilon(1). CF(0) has three main subunits: a, b and c.

The protein localises to the mitochondrion. Its subcellular location is the mitochondrion inner membrane. Functionally, mitochondrial membrane ATP synthase (F(1)F(0) ATP synthase or Complex V) produces ATP from ADP in the presence of a proton gradient across the membrane which is generated by electron transport complexes of the respiratory chain. F-type ATPases consist of two structural domains, F(1) - containing the extramembraneous catalytic core and F(0) - containing the membrane proton channel, linked together by a central stalk and a peripheral stalk. During catalysis, ATP synthesis in the catalytic domain of F(1) is coupled via a rotary mechanism of the central stalk subunits to proton translocation. Part of the complex F(0) domain and the peripheric stalk, which acts as a stator to hold the catalytic alpha(3)beta(3) subcomplex and subunit a/ATP6 static relative to the rotary elements. The protein is ATP synthase subunit O, mitochondrial of Pisum sativum (Garden pea).